Consider the following 384-residue polypeptide: Succinyl-diaminopimelate desuccinylase (384 aa).

His-71 is a Zn(2+) binding site. Residue Asp-73 is part of the active site. A Zn(2+)-binding site is contributed by Asp-104. Residue Glu-138 is the Proton acceptor of the active site. Zn(2+)-binding residues include Glu-139, Glu-167, and His-353.

This sequence belongs to the peptidase M20A family. DapE subfamily. As to quaternary structure, homodimer. The cofactor is Zn(2+). Co(2+) is required as a cofactor.

It catalyses the reaction N-succinyl-(2S,6S)-2,6-diaminopimelate + H2O = (2S,6S)-2,6-diaminopimelate + succinate. It functions in the pathway amino-acid biosynthesis; L-lysine biosynthesis via DAP pathway; LL-2,6-diaminopimelate from (S)-tetrahydrodipicolinate (succinylase route): step 3/3. In terms of biological role, catalyzes the hydrolysis of N-succinyl-L,L-diaminopimelic acid (SDAP), forming succinate and LL-2,6-diaminopimelate (DAP), an intermediate involved in the bacterial biosynthesis of lysine and meso-diaminopimelic acid, an essential component of bacterial cell walls. The sequence is that of Succinyl-diaminopimelate desuccinylase from Aromatoleum aromaticum (strain DSM 19018 / LMG 30748 / EbN1) (Azoarcus sp. (strain EbN1)).